We begin with the raw amino-acid sequence, 580 residues long: High affinity choline transporter 1 (580 aa).

Residues 1-6 (MAFHVE) are Extracellular-facing. Residues 7 to 27 (GLIAIIVFYLLILLVGIWAAW) form a helical membrane-spanning segment. The Cytoplasmic portion of the chain corresponds to 28 to 48 (RTKNSGSAEERSEAIIVGGRD). A helical transmembrane segment spans residues 49 to 69 (IGLLVGGFTMTATWVGGGYIN). The Extracellular segment spans residues 70–81 (GTAEAVYVPGYG). Residues 82-102 (LAWAQAPIGYSLSLILGGLFF) form a helical membrane-spanning segment. Residues 103-125 (AKPMRSKGYVTMLDPFQQIYGKR) are Cytoplasmic-facing. The helical transmembrane segment at 126–146 (MGGLLFIPALMGEMFWAAAIF) threads the bilayer. Residues 147-164 (SALGATISVIIDVDMHIS) lie on the Extracellular side of the membrane. Residues 165–185 (VIISALIATLYTLVGGLYSVA) form a helical membrane-spanning segment. At 186–191 (YTDVVQ) the chain is on the cytoplasmic side. Residues 192-212 (LFCIFVGLWISVPFALSHPAV) traverse the membrane as a helical segment. At 213 to 237 (ADIGFTAVHAKYQKPWLGTVDSSEV) the chain is on the extracellular side. A helical transmembrane segment spans residues 238 to 258 (YSWLDSFLLLMLGGIPWQAYF). Residues 259–274 (QRVLSSSSATYAQVLS) lie on the Cytoplasmic side of the membrane. A helical transmembrane segment spans residues 275–295 (FLAAFGCLVMAIPAILIGAIG). At 296-317 (ASTDWNQTAYGLPDPKTTEEAD) the chain is on the extracellular side. N301 carries N-linked (GlcNAc...) asparagine glycosylation. A helical membrane pass occupies residues 318–338 (MILPIVLQYLCPVYISFFGLG). Residues 339–376 (AVSAAVMSSADSSILSASSMFARNIYQLSFRQNASDKE) lie on the Cytoplasmic side of the membrane. Residues 377–397 (IVWVMRITVFVFGASATAMAL) form a helical membrane-spanning segment. Over 398 to 406 (LTKTVYGLW) the chain is Extracellular. The chain crosses the membrane as a helical span at residues 407-427 (YLSSDLVYIVIFPQLLCVLFV). Topologically, residues 428–435 (KGTNTYGA) are cytoplasmic. A helical transmembrane segment spans residues 436–456 (VAGYVSGLFLRITGGEPYLYL). Residues 457–481 (QPLIFYPGYYPDDNGIYNQKFPFKT) lie on the Extracellular side of the membrane. Residues 482–502 (LAMVTSFLTNICISYLAKYLF) traverse the membrane as a helical segment. The interval 502–580 (FESGTLPPKL…EGSGTEDNLQ (79 aa)) is mediates interaction with SEC14L1. Residues 503 to 580 (ESGTLPPKLD…EGSGTEDNLQ (78 aa)) lie on the Cytoplasmic side of the membrane. A Dileucine-like motif motif is present at residues 527-532 (DKTILV).

Belongs to the sodium:solute symporter (SSF) (TC 2.A.21) family. As to quaternary structure, homooligomerizes at cell surface. Interacts with SEC14L1; may regulate SLC5A7. Post-translationally, phosphorylated. As to expression, expressed in putamen, spinal cord and medulla. Expressed in cholinergic neurons.

It localises to the presynaptic cell membrane. Its subcellular location is the cell projection. The protein resides in the axon. The protein localises to the early endosome membrane. It is found in the cytoplasmic vesicle. It localises to the secretory vesicle. Its subcellular location is the synaptic vesicle membrane. It catalyses the reaction choline(out) + n Na(+)(out) = choline(in) + n Na(+)(in). Choline uptake activity is regulated by SLC5A7/CHT1 internalization (inactive form) from the cell surface and recycling of internalized SLC5A7/CHT1 into the cell surface (active form). Activated by extracellular chloride ion. Specifically inhibited by nanomolar concentrations of hemicholinium 3. High-affinity Na(+)-coupled choline transmembrane symporter. Functions as an electrogenic, voltage-dependent transporter with variable charge/choline stoichiometry. Choline uptake and choline-induced current is also Cl(-)-dependent where Cl(-) is likely a regulatory ion rather than cotransported ion. Plays a critical role in acetylcholine (ACh) synthesis by taking up the substrate choline from the synaptic cleft into the presynaptic nerve terminals after neurotransmitter release. SLC5A7/CHT1-mediated choline high-affinity transport in cholinergic neurons is the rate-limiting step for production of ACh, thereby facilitating communication by subsequent action potentials. Localized predominantly in presynaptic terminal intracellular organelles, and translocated to the plasma membrane in active form in response to neuronal activity. The polypeptide is High affinity choline transporter 1 (Homo sapiens (Human)).